A 332-amino-acid chain; its full sequence is mRNA-decapping enzyme 1 (332 aa).

The segment covering 141–173 (ARAAKAASEAPQASVPAPTQAPAAPAQAPQMAP) has biased composition (low complexity). Positions 141-175 (ARAAKAASEAPQASVPAPTQAPAAPAQAPQMAPQA) are disordered.

Belongs to the DCP1 family. May be a component of the decapping complex composed of dcap-1 and dcap-2. Expressed in neurons including touch receptor neurons and motor neurons.

Its subcellular location is the cytoplasm. The protein localises to the cytoplasmic granule. Functionally, component of the decapping complex necessary for the degradation of mRNAs, both in normal mRNA turnover and in nonsense-mediated mRNA decay. In contrast to orthologs, does not possess decapping activity and does not remove the 7-methyl guanine cap structure from mRNA molecules. In the nervous system, negatively regulates the expression of insulin-like peptide ins-7, which in turn promotes longevity. This may in part be through promoting the activity of daf-16 in distal tissues. Required for the developmental axon guidance and regrowth of PLM touch receptor neurons. In ADL sensory neurons, plays a role in ciliary shape formation. Acts in neurons to promote larval survival at high temperatures by negatively regulating lin-14 expression. In Caenorhabditis elegans, this protein is mRNA-decapping enzyme 1.